A 323-amino-acid chain; its full sequence is Cyclin-H (323 aa).

S5 carries the phosphoserine; by CDK8 modification. S132 carries the phosphoserine modification. Residues 297–323 are disordered; that stretch reads YEDDDYVSKKSKHEEEEWTDDDLVESL. Positions 302–311 are enriched in basic and acidic residues; sequence YVSKKSKHEE. Residue S304 is modified to Phosphoserine; by CDK8. Acidic residues predominate over residues 312–323; it reads EEWTDDDLVESL. A Phosphothreonine modification is found at T315. A Phosphoserine modification is found at S322.

The protein belongs to the cyclin family. Cyclin C subfamily. In terms of assembly, associates primarily with CDK7 and MAT1 to form the CAK complex. CAK can further associate with the core-TFIIH to form the TFIIH basal transcription factor.

The protein localises to the nucleus. Its function is as follows. Regulates CDK7, the catalytic subunit of the CDK-activating kinase (CAK) enzymatic complex. CAK activates the cyclin-associated kinases CDK1, CDK2, CDK4 and CDK6 by threonine phosphorylation. CAK complexed to the core-TFIIH basal transcription factor activates RNA polymerase II by serine phosphorylation of the repetitive C-terminal domain (CTD) of its large subunit (POLR2A), allowing its escape from the promoter and elongation of the transcripts. Involved in cell cycle control and in RNA transcription by RNA polymerase II. Its expression and activity are constant throughout the cell cycle. This is Cyclin-H (CCNH) from Homo sapiens (Human).